The primary structure comprises 426 residues: Glutamate-1-semialdehyde 2,1-aminomutase (426 aa).

Lys265 carries the post-translational modification N6-(pyridoxal phosphate)lysine.

It belongs to the class-III pyridoxal-phosphate-dependent aminotransferase family. HemL subfamily. In terms of assembly, homodimer. Pyridoxal 5'-phosphate is required as a cofactor.

It is found in the cytoplasm. The enzyme catalyses (S)-4-amino-5-oxopentanoate = 5-aminolevulinate. It functions in the pathway porphyrin-containing compound metabolism; protoporphyrin-IX biosynthesis; 5-aminolevulinate from L-glutamyl-tRNA(Glu): step 2/2. The polypeptide is Glutamate-1-semialdehyde 2,1-aminomutase (Cellvibrio japonicus (strain Ueda107) (Pseudomonas fluorescens subsp. cellulosa)).